The chain runs to 398 residues: SEC12-like protein 1 (398 aa).

An N-acetylmethionine modification is found at methionine 1. Topologically, residues 1 to 337 are cytoplasmic; that stretch reads MEIEEASRES…TVPKEWKEWQ (337 aa). WD repeat units lie at residues 71–110, 120–159, 162–201, 252–291, and 296–334; these read DSDG…TGIT, QNAG…VILD, KAHK…PLST, LSRK…IYHY, and HLGQ…KEWK. A helical transmembrane segment spans residues 338-358; the sequence is IYALLFCLFMASVIAAYVFFE. The Lumenal portion of the chain corresponds to 359-398; sequence NSDSFWKLPMGKDQKRPKISLFGGSSSTPSEDHSRWNLDL.

In terms of tissue distribution, ubiquitous with higher levels in flowers, roots and senescing leaves.

The protein resides in the endoplasmic reticulum membrane. Involved in Pi uptake by facilitating the trafficking of PHT1-1/PHT1;1 from the endoplasmic reticulum to the plasma membrane. This chain is SEC12-like protein 1 (PHF1), found in Arabidopsis thaliana (Mouse-ear cress).